A 989-amino-acid chain; its full sequence is Zinc finger SWIM domain-containing protein 4 (989 aa).

The disordered stretch occupies residues 1 to 32 (MEPPAAKRSRGCPAGPEERDAGAGAARGRGRP). The SWIM-type zinc finger occupies 139–176 (YHVSISFDRCKITSVSCGCDNRDLFYCAHVVALSLYRI).

In Homo sapiens (Human), this protein is Zinc finger SWIM domain-containing protein 4 (ZSWIM4).